Consider the following 162-residue polypeptide: Solute carrier family 2, facilitated glucose transporter member 4 (162 aa).

The Extracellular segment spans residues 1 to 13; that stretch reads TSIFETAGVGQPA. Residues 14-34 form a helical membrane-spanning segment; it reads YATIGAGVVNTVFTLVSVFLV. Asparagine 23 serves as a coordination point for D-glucose. At 35-43 the chain is on the cytoplasmic side; it reads ERAGRRTLH. A helical membrane pass occupies residues 44–64; sequence LLGLAGMCGCAILMTIALLLL. Residues 65 to 75 are Extracellular-facing; sequence ERLPAMSYVSI. A helical membrane pass occupies residues 76–96; it reads VAIFGFVAFFEIGPGPIPWFI. Glutamate 86 and tryptophan 94 together coordinate D-glucose. Over 97–107 the chain is Cytoplasmic; sequence VAELFSQGPRP. The helical transmembrane segment at 108-128 threads the bilayer; that stretch reads AAMAVAGFCNWTSNFIIGMGF. Residues 129 to 135 lie on the Extracellular side of the membrane; it reads QYIAXAM. A helical transmembrane segment spans residues 136–156; sequence GPYVFLLFAVLLLAFFIFTFL. The Cytoplasmic segment spans residues 157–162; it reads KVPETR.

The protein belongs to the major facilitator superfamily. Sugar transporter (TC 2.A.1.1) family. Glucose transporter subfamily. Binds to DAXX. Interacts via its N-terminus with SRFBP1. Interacts with NDUFA9. Interacts with TRARG1; the interaction is required for proper SLC2A4 recycling after insulin stimulation. Sumoylated. Post-translationally, palmitoylated. Palmitoylation by ZDHHC7 controls the insulin-dependent translocation of GLUT4 to the plasma membrane.

It localises to the cell membrane. The protein resides in the endomembrane system. Its subcellular location is the cytoplasm. The protein localises to the perinuclear region. It catalyses the reaction D-glucose(out) = D-glucose(in). In terms of biological role, insulin-regulated facilitative glucose transporter, which plays a key role in removal of glucose from circulation. Response to insulin is regulated by its intracellular localization: in the absence of insulin, it is efficiently retained intracellularly within storage compartments in muscle and fat cells. Upon insulin stimulation, translocates from these compartments to the cell surface where it transports glucose from the extracellular milieu into the cell. In Canis lupus familiaris (Dog), this protein is Solute carrier family 2, facilitated glucose transporter member 4.